The following is a 382-amino-acid chain: ORC1-type DNA replication protein 1 (382 aa).

ATP contacts are provided by residues 63-67 (TGKTA), Y205, and R217.

Belongs to the CDC6/cdc18 family. As to quaternary structure, monomer. Interacts with MCM via the WH domain. In terms of processing, autophosphorylated on a serine. Phosphorylation is stimulated by binding to MCM. Both single-stranded DNA and double-stranded DNA inhibit the phosphorylation reaction.

Involved in regulation of DNA replication. May play an essential role in origin recognition. Binds to DNA, with a preference for origin-specific double-stranded sequences. Does not bind single-stranded DNA. Inhibits MCM helicase activity but does not affect its oligomeric state. This Methanothermobacter thermautotrophicus (strain ATCC 29096 / DSM 1053 / JCM 10044 / NBRC 100330 / Delta H) (Methanobacterium thermoautotrophicum) protein is ORC1-type DNA replication protein 1 (cdc6-1).